We begin with the raw amino-acid sequence, 186 residues long: UPF0301 protein Mmc1_0726 (186 aa).

Belongs to the UPF0301 (AlgH) family.

The sequence is that of UPF0301 protein Mmc1_0726 from Magnetococcus marinus (strain ATCC BAA-1437 / JCM 17883 / MC-1).